An 835-amino-acid chain; its full sequence is Toll-like receptor 4 (835 aa).

The first 25 residues, 1 to 25, serve as a signal peptide directing secretion; sequence MMPLLHLAGTLIMALFLSCLRPGSL. Residues 26–638 are Extracellular-facing; the sequence is NPCIEVLPNI…KTIISVSVVS (613 aa). Cysteines 28 and 39 form a disulfide. N-linked (GlcNAc...) asparagine glycans are attached at residues asparagine 34, asparagine 43, and asparagine 75. LRR repeat units follow at residues 54-75, 78-99, 102-123, 126-147, and 150-171; these read STKNLDLSFNPLKILRSYSFTN, QLQWLDLSRCEIETIEDKAWHG, QLSTLVLTGNPIKSFSPGSFSG, NLENLVAVETKMTSLEGFHIGQ, and SLKKLNVAHNLIHSFKLPEYFS. Asparagine 172 carries N-linked (GlcNAc...) asparagine glycosylation. 3 LRR repeats span residues 175 to 198, 204 to 224, and 226 to 247; these read NLEHVDLSYNYIQTISVKDLQFLR, NLSLDLSLNPIDSIQAQAFQG, and RLHELTLRSNFNSSNVLKMCLQ. N-linked (GlcNAc...) asparagine glycosylation is found at asparagine 204, asparagine 237, asparagine 248, asparagine 281, and asparagine 307. Cysteine 280 and cysteine 304 are joined by a disulfide. Residues 372–381 form an LRR 9 repeat; the sequence is SLRYLDLSRN. An intrachain disulfide couples cysteine 388 to cysteine 389. 4 LRR repeats span residues 398–420, 421–442, 446–467, and 470–491; these read NLKYLDLSFNGVILMSANFMGLE, ELEYLDFQHSTLKKVTEFSVFL, KLLYLDISYTNTKIDFDGIFLG, and SLNTLKMAGNSFKDNTLSNVFT. 3 N-linked (GlcNAc...) asparagine glycosylation sites follow: asparagine 492, asparagine 495, and asparagine 524. 3 LRR repeats span residues 495-516, 519-540, and 543-564; these read NLTFLDLSKCQLEQISRGVFDT, RLQLLNMSHNNLLFLDPSHYKQ, and SLRTLDCSFNRIETSKGILQHF. 2 N-linked (GlcNAc...) asparagine glycosylation sites follow: asparagine 572 and asparagine 575. The 52-residue stretch at 576–627 folds into the LRRCT domain; that stretch reads NSVACICEYQNFLQWVKDQKMFLVNVEQMKCASPIDMKASLVLDFTNSTCYI. 2 disulfide bridges follow: cysteine 580–cysteine 606 and cysteine 582–cysteine 625. An N-linked (GlcNAc...) asparagine glycan is attached at asparagine 622. Residues 639 to 659 form a helical membrane-spanning segment; sequence VLVVATVAFLIYHFYFHLILI. At 660–835 the chain is on the cytoplasmic side; that stretch reads AGCKKYSRGE…EEEQEATTLT (176 aa). Positions 670-813 constitute a TIR domain; the sequence is SIYDAFVIYS…IFWRRLKKAL (144 aa).

This sequence belongs to the Toll-like receptor family. Belongs to the lipopolysaccharide (LPS) receptor, a multi-protein complex containing at least CD14, LY96 and TLR4. Binding to bacterial LPS leads to homodimerization. Interacts with LY96 via the extracellular domain. Interacts with MYD88 and TIRAP via their respective TIR domains. Interacts with TICAM2. Interacts with NOX4. Interacts with CNPY3 and HSP90B1; this interaction is required for proper folding in the endoplasmic reticulum. Interacts with MAP3K21; this interaction leads to negative regulation of TLR4 signaling. Interacts with CD36, following CD36 stimulation by oxLDL or amyloid-beta 42, and forms a heterodimer with TLR6. The trimeric complex is internalized and triggers inflammatory response. LYN kinase activity facilitates TLR4-TLR6 heterodimerization and signal initiation. Interacts with TICAM1 in response to LPS in a WDFY1-dependent manner. Interacts with WDFY1 in response to LPS. Interacts with SMPDL3B. Interacts with CEACAM1; upon lipopolysaccharide stimulation, forms a complex including TLR4 and the phosphorylated form of SYK and CEACAM1, which in turn, recruits PTPN6 that dephosphorylates SYK, reducing the production of reactive oxygen species (ROS) and lysosome disruption, which in turn, reduces the activity of the inflammasome. Interacts with RFTN1; the interaction occurs in response to lipopolysaccharide stimulation. Interacts with SCIMP; the interaction occurs in response to lipopolysaccharide stimulation and is enhanced by phosphorylation of SCIMP by LYN. This interaction facilitates the phosphorylation of TLR4 by LYN which elicits a selective cytokine response in macrophages. Interacts with TRAF3IP3. Interacts with TREM1; this interaction enhances TLR4-mediated inflammatory response. Interacts with ZG16B/PAUF. Interacts with CD82; this interaction inhibits TLR4-mediated signaling pathway. Phosphorylated on tyrosine residues by LYN after binding lipopolysaccharide. In terms of processing, ubiquitinated by RNF128 via 'Lys-28'-linked polyubiquitin chains, leading to proteasomal degradation.

It is found in the cell membrane. It localises to the early endosome. The protein resides in the cell projection. The protein localises to the ruffle. Transmembrane receptor that functions as a pattern recognition receptor recognizing pathogen- and damage-associated molecular patterns (PAMPs and DAMPs) to induce innate immune responses via downstream signaling pathways. At the plasma membrane, cooperates with LY96 to mediate the innate immune response to bacterial lipopolysaccharide (LPS). Also involved in LPS-independent inflammatory responses triggered by free fatty acids, such as palmitate, and Ni(2+). Mechanistically, acts via MYD88, TIRAP and TRAF6, leading to NF-kappa-B activation, cytokine secretion and the inflammatory response. Alternatively, CD14-mediated TLR4 internalization via endocytosis is associated with the initiation of a MYD88-independent signaling via the TICAM1-TBK1-IRF3 axis leading to type I interferon production. In addition to the secretion of proinflammatory cytokines, initiates the activation of NLRP3 inflammasome and formation of a positive feedback loop between autophagy and NF-kappa-B signaling cascade. In complex with TLR6, promotes inflammation in monocytes/macrophages by associating with TLR6 and the receptor CD86. Upon ligand binding, such as oxLDL or amyloid-beta 42, the TLR4:TLR6 complex is internalized and triggers inflammatory response, leading to NF-kappa-B-dependent production of CXCL1, CXCL2 and CCL9 cytokines, via MYD88 signaling pathway, and CCL5 cytokine, via TICAM1 signaling pathway. In myeloid dendritic cells, vesicular stomatitis virus glycoprotein G but not LPS promotes the activation of IRF7, leading to type I IFN production in a CD14-dependent manner. The sequence is that of Toll-like receptor 4 (Tlr4) from Rattus norvegicus (Rat).